The following is a 431-amino-acid chain: Glutamate-1-semialdehyde 2,1-aminomutase (431 aa).

At Lys-269 the chain carries N6-(pyridoxal phosphate)lysine.

The protein belongs to the class-III pyridoxal-phosphate-dependent aminotransferase family. HemL subfamily. In terms of assembly, homodimer. The cofactor is pyridoxal 5'-phosphate.

It localises to the cytoplasm. The catalysed reaction is (S)-4-amino-5-oxopentanoate = 5-aminolevulinate. It functions in the pathway porphyrin-containing compound metabolism; protoporphyrin-IX biosynthesis; 5-aminolevulinate from L-glutamyl-tRNA(Glu): step 2/2. Its pathway is porphyrin-containing compound metabolism; chlorophyll biosynthesis. The protein is Glutamate-1-semialdehyde 2,1-aminomutase of Chlorobium limicola (strain DSM 245 / NBRC 103803 / 6330).